Here is a 320-residue protein sequence, read N- to C-terminus: L-lactate dehydrogenase 1 (320 aa).

Residues Val-18, Asp-39, Arg-44, Tyr-69, and 83–84 (GA) contribute to the NAD(+) site. Substrate contacts are provided by Gln-86 and Arg-92. Residues Ser-105, 122-124 (AAN), and Ser-147 each bind NAD(+). A substrate-binding site is contributed by 124–127 (NPVD). Residue 152 to 155 (DSSR) coordinates substrate. His-179 functions as the Proton acceptor in the catalytic mechanism. Phosphotyrosine is present on Tyr-223. Thr-232 lines the substrate pocket.

Belongs to the LDH/MDH superfamily. LDH family. In terms of assembly, homotetramer.

It localises to the cytoplasm. It carries out the reaction (S)-lactate + NAD(+) = pyruvate + NADH + H(+). Its pathway is fermentation; pyruvate fermentation to lactate; (S)-lactate from pyruvate: step 1/1. Its function is as follows. Catalyzes the conversion of lactate to pyruvate. In Lactiplantibacillus plantarum (strain ATCC BAA-793 / NCIMB 8826 / WCFS1) (Lactobacillus plantarum), this protein is L-lactate dehydrogenase 1.